The primary structure comprises 460 residues: N-myc proto-oncogene protein (460 aa).

Positions 19–47 (LEFDSLQPCFYPDEDDFYFGGPDSTPPGE) are interaction with AURKA. Residues 61-90 (LSPSRAFSEQSPEPSDWATEMLLPEADLWG) form an interaction with AURKA and FBXW7 region. A 9aaTAD motif is present at residues 76-85 (DWATEMLLPE). Disordered regions lie at residues 131 to 169 (VSEK…GAGR), 221 to 288 (AAAP…SNSK), and 330 to 388 (APSP…LERQ). Residues 138 to 158 (GRGPPAAGPATPGAGAANPAG) are compositionally biased toward low complexity. Residues 159 to 169 (RGHGGTAGAGR) are compositionally biased toward gly residues. Low complexity predominate over residues 221 to 233 (AAAPASAAVAAPP). Residues 255–274 (TLSDSDDEDDEEEDEEEEID) show a composition bias toward acidic residues. Phosphoserine; by CK2 is present on residues S257 and S259. Residues 377–429 (ERRRNHNILERQRRNDLRSSFLTLRDHVPELVKNEKAAKVVILKKATEYVHSL) enclose the bHLH domain. A leucine-zipper region spans residues 429-450 (LQAEEHQLLLEKEKLQARQQQL).

In terms of assembly, efficient DNA binding requires dimerization with another bHLH protein. Binds DNA as a heterodimer with MAX. Interacts with KDM5A, KDM5B and HUWE1. Interacts with MYCNOS. Interacts with AURKA; interaction is phospho-independent and triggers AURKA activation; AURKA competes with FBXW7 for binding to unphosphorylated MYCN but not for binding to unphosphorylated MYCN. Interacts with FBXW7; FBXW7 competes with AURKA for binding to unphosphorylated MYCN but not for binding to phosphorylated MYCN. In terms of processing, phosphorylated by GSK3-beta which may promote its degradation. Phosphorylated by AURKA.

The protein localises to the nucleus. Its function is as follows. Positively regulates the transcription of MYCNOS in neuroblastoma cells. This chain is N-myc proto-oncogene protein (MYCN), found in Marmota monax (Woodchuck).